The chain runs to 214 residues: MRPLILSIFALFLAGCTHSQQSMVDTFRASLFDNQDITVADQQIQALPYSTMYLRLNEGQRIFVVLGYIEQEQSKWLSQDNAMLVTHNGRLLKTVKLNNNLLEVTNSGQDPLRNALAIKDGSRWTRDILWSEDNHFRSATLSSTFSFAGLETLNIAGRNVLCNVWQEEVTSTRPEKQWQNTFWVDSATGQVRQSRQMLGAGVIPVEMTFLKPAP.

The N-terminal stretch at 1–15 (MRPLILSIFALFLAG) is a signal peptide. A lipid anchor (N-palmitoyl cysteine) is attached at Cys-16. Cys-16 is lipidated: S-diacylglycerol cysteine.

This sequence to E.coli YjbF.

It is found in the cell membrane. This is an uncharacterized protein from Escherichia coli (strain K12).